The following is a 679-amino-acid chain: Stress-70 protein, mitochondrial (679 aa).

A mitochondrion-targeting transit peptide spans 1–46 (MISASRAVAARLVGAAASRGPTAARHQDGWNGLSHEAFRIVSRRDY). The interaction with NFS1 stretch occupies residues 1–432 (MISASRAVAA…IQGGVLAGDV (432 aa)). The ADP site is built by Thr63 and Asn64. The interval 63–431 (TNSCVAVMEG…AIQGGVLAGD (369 aa)) is nucleotide-binding domain (NBD). Lys76 bears the N6-acetyllysine mark. Position 87 is a phosphothreonine (Thr87). Residues Lys135 and Lys138 each carry the N6-acetyllysine; alternate modification. N6-succinyllysine; alternate occurs at positions 135 and 138. An N6-acetyllysine modification is found at Lys143. Position 206 is an N6-acetyllysine; alternate (Lys206). Lys206 bears the N6-succinyllysine; alternate mark. The residue at position 206 (Lys206) is an N6-malonyllysine; alternate. An N6-acetyllysine mark is found at Lys234 and Lys288. The residue at position 300 (Lys300) is an N6-acetyllysine; alternate. Lys300 is modified (N6-succinyllysine; alternate). Residues Glu313, Lys316, and Ser320 each contribute to the ADP site. An N6-succinyllysine modification is found at Lys368. Gly388 and Arg391 together coordinate ADP. An N6-succinyllysine modification is found at Lys394. Ser408 is modified (phosphoserine). The tract at residues 432–441 (VTDVLLLDVT) is interdomain linker. Residues 432 to 679 (VTDVLLLDVT…QKEDQKEEKQ (248 aa)) form an interaction with FXN and ISCU region. A substrate-binding domain (SBD) region spans residues 442–679 (PLSLGIETLG…QKEDQKEEKQ (238 aa)). Position 513 is an omega-N-methylarginine (Arg513). 2 positions are modified to N6-acetyllysine; alternate: Lys567 and Lys600. N6-succinyllysine; alternate occurs at positions 567 and 600. Lys610 is subject to N6-succinyllysine. Residue Lys612 is modified to N6-acetyllysine. The residue at position 646 (Lys646) is an N6-acetyllysine; alternate. Lys646 bears the N6-succinyllysine; alternate mark. The disordered stretch occupies residues 656-679 (ASEREGSGSSGTGEQKEDQKEEKQ). Basic and acidic residues predominate over residues 669–679 (EQKEDQKEEKQ).

It belongs to the heat shock protein 70 family. Interacts strongly with the intermediate form of FXN and weakly with its mature form. Interacts with HSCB. Associates with the mitochondrial contact site and cristae organizing system (MICOS) complex, composed of at least MICOS10/MIC10, CHCHD3/MIC19, CHCHD6/MIC25, APOOL/MIC27, IMMT/MIC60, APOO/MIC23/MIC26 and QIL1/MIC13. This complex was also known under the names MINOS or MitOS complex. The MICOS complex associates with mitochondrial outer membrane proteins SAMM50, MTX1, MTX2 and DNAJC11, mitochondrial inner membrane protein TMEM11 and with HSPA9. Interacts with DNLZ, the interaction is required to prevent self-aggregation. Interacts with TESPA1. Interacts with PDPN. Interacts with NFU1, NFS1 and ISCU. Interacts with TP53; the interaction promotes TP53 degradation. Interacts (via SBD domain) with UBXN2A; the interaction with UBXN2A inhibits HSPA9/MOT-2 interaction with and degradation of TP53, thereby promotes TP53 translocation to the nucleus. Interacts with ITPR1 AND VDAC1; this interaction couples ITPR1 to VDAC1. Component of the TIM23 mitochondrial inner membrane pre-sequence translocase complex.

It is found in the mitochondrion. The protein resides in the nucleus. The protein localises to the nucleolus. Its subcellular location is the cytoplasm. It localises to the mitochondrion matrix. It carries out the reaction ATP + H2O = ADP + phosphate + H(+). The chaperone activity is regulated by ATP-induced allosteric coupling of the nucleotide-binding (NBD) and substrate-binding (SBD) domains. ATP binding in the nucleotide-binding pocket (NBP) leads to a conformational change in the NBD, which is transferred through the interdomain linker (IDL) to the substrate-binding domain (SBD). This elicits a reduced substrate affinity and a faster substrate exchange rate. Upon hydrolysis of ATP to ADP, the protein undergoes a conformational change that increases its affinity for substrate proteins. It cycles through repeated phases of ATP hydrolysis and nucleotide exchange, facilitating repeated cycles of substrate binding and release. Functions in collaboration with co-chaperones. Functions with the co-chaperone, DNLZ, to maintain solubility and regulate ATP hydrolysis. Nucleotide exchange factors, GRPEL1 and GRPEL2, accelerate nucleotide exchange. Mitochondrial chaperone that plays a key role in mitochondrial protein import, folding, and assembly. Plays an essential role in the protein quality control system, the correct folding of proteins, the re-folding of misfolded proteins, and the targeting of proteins for subsequent degradation. These processes are achieved through cycles of ATP binding, ATP hydrolysis, and ADP release, mediated by co-chaperones. In mitochondria, it associates with the TIM (translocase of the inner membrane) protein complex to assist in the import and folding of mitochondrial proteins. Plays an important role in mitochondrial iron-sulfur cluster (ISC) biogenesis, interacts with and stabilizes ISC cluster assembly proteins FXN, NFU1, NFS1 and ISCU. Regulates erythropoiesis via stabilization of ISC assembly. Regulates mitochondrial calcium-dependent apoptosis by coupling two calcium channels, ITPR1 and VDAC1, at the mitochondria-associated endoplasmic reticulum (ER) membrane to facilitate calcium transport from the ER lumen to the mitochondria intermembrane space, providing calcium for the downstream calcium channel MCU, which releases it into the mitochondrial matrix. Although primarily located in the mitochondria, it is also found in other cellular compartments. In the cytosol, it associates with proteins involved in signaling, apoptosis, or senescence. It may play a role in cell cycle regulation via its interaction with and promotion of degradation of TP53. May play a role in the control of cell proliferation and cellular aging. Protects against reactive oxygen species (ROS). Extracellular HSPA9 plays a cytoprotective role by preventing cell lysis following immune attack by the membrane attack complex by disrupting formation of the complex. This Pongo abelii (Sumatran orangutan) protein is Stress-70 protein, mitochondrial.